A 228-amino-acid polypeptide reads, in one-letter code: MTSIRSASTPVEVRRLGTLDYTSAWQLQRETADARVAGGPDTLLLLEHPPVYTAGKRTEPHERPLDGTPVVDTDRGGKITWHGPGQLVGYPIIGLTEPLDVVNFVRRLEESLITVCAELGLHTERVEGRSGVWVPADDLRPARKIGAIGIRVSRATTLHGFALNCDCDLSAFSSIIPCGITDAGVTSLTAELGRRVTVDEVADRVAAAVCDALDGRLPVGHHETLNVG.

The BPL/LPL catalytic domain maps to 37-217 (AGGPDTLLLL…AVCDALDGRL (181 aa)). Substrate-binding positions include 75–82 (RGGKITWH), 147–149 (AIG), and 160–162 (GFA). Cysteine 178 (acyl-thioester intermediate) is an active-site residue.

Belongs to the LipB family.

The protein localises to the cytoplasm. The catalysed reaction is octanoyl-[ACP] + L-lysyl-[protein] = N(6)-octanoyl-L-lysyl-[protein] + holo-[ACP] + H(+). Its pathway is protein modification; protein lipoylation via endogenous pathway; protein N(6)-(lipoyl)lysine from octanoyl-[acyl-carrier-protein]: step 1/2. In terms of biological role, catalyzes the transfer of endogenously produced octanoic acid from octanoyl-acyl-carrier-protein onto the lipoyl domains of lipoate-dependent enzymes. Lipoyl-ACP can also act as a substrate although octanoyl-ACP is likely to be the physiological substrate. In Mycolicibacterium smegmatis (strain ATCC 700084 / mc(2)155) (Mycobacterium smegmatis), this protein is Octanoyltransferase.